Here is a 243-residue protein sequence, read N- to C-terminus: DNA repair protein RecO (243 aa).

The protein belongs to the RecO family.

Involved in DNA repair and RecF pathway recombination. This chain is DNA repair protein RecO, found in Frankia casuarinae (strain DSM 45818 / CECT 9043 / HFP020203 / CcI3).